A 710-amino-acid chain; its full sequence is Ephexin-1 (710 aa).

Residues Met1–Ser20 show a composition bias toward basic and acidic residues. The interval Met1 to Asp146 is disordered. The regulatory region; modulates activity toward RHOA, RAC1 and CDC42 stretch occupies residues Met1 to Ile272. Positions Gln123 to Thr137 are enriched in polar residues. Tyr177 bears the Phosphotyrosine mark. Residues Arg192–Arg234 form a disordered region. A compositionally biased stretch (acidic residues) spans Asp211–Leu227. The 185-residue stretch at Arg273–Gly457 folds into the DH domain. The PH domain occupies Trp489–Arg601. Positions Leu612 to Asn673 constitute an SH3 domain. Positions His688–Lys699 are enriched in basic and acidic residues. The disordered stretch occupies residues His688 to Gln710. Residues Asp700 to Gln710 are compositionally biased toward basic residues.

As to quaternary structure, interacts with CDK5R1 and EPHA4; activated by EPHA4 through the CDK5 kinase. Src-dependent phosphorylation at Tyr-177 upon EPHA4 activation increases the guanine exchange factor activity toward RHOA. Phosphorylation by CDK5 upon EPHA4 activation by EFNA1 may regulate dendritic spine morphogenesis. Highly expressed in brain and to a lower extent in eye.

It is found in the cytoplasm. The protein resides in the membrane. Its subcellular location is the cell projection. It localises to the growth cone. In terms of biological role, acts as a guanine nucleotide exchange factor (GEF) which differentially activates the GTPases RHOA, RAC1 and CDC42. Plays a role in axon guidance regulating ephrin-induced growth cone collapse and dendritic spine morphogenesis. Upon activation by ephrin through EPHA4, the GEF activity switches toward RHOA resulting in its activation. Activated RHOA promotes cone retraction at the expense of RAC1- and CDC42-stimulated growth cone extension. The protein is Ephexin-1 (Ngef) of Mus musculus (Mouse).